We begin with the raw amino-acid sequence, 137 residues long: ATP synthase epsilon chain (137 aa).

It belongs to the ATPase epsilon chain family. In terms of assembly, F-type ATPases have 2 components, CF(1) - the catalytic core - and CF(0) - the membrane proton channel. CF(1) has five subunits: alpha(3), beta(3), gamma(1), delta(1), epsilon(1). CF(0) has three main subunits: a, b and c.

Its subcellular location is the cellular thylakoid membrane. Its function is as follows. Produces ATP from ADP in the presence of a proton gradient across the membrane. The protein is ATP synthase epsilon chain of Synechococcus sp. (strain JA-2-3B'a(2-13)) (Cyanobacteria bacterium Yellowstone B-Prime).